We begin with the raw amino-acid sequence, 1706 residues long: 5'-3' exoribonuclease 1 (1706 aa).

Ser1348 carries the post-translational modification Phosphoserine. The disordered stretch occupies residues 1619–1706 (ENKEAQSSQA…VNFGVSKPSE (88 aa)). A compositionally biased stretch (polar residues) spans 1623–1642 (AQSSQATPVQTSQPDSSNIV). The residue at position 1645 (Ser1645) is a Phosphoserine. Low complexity predominate over residues 1647–1657 (RESSSASLKSS). A compositionally biased stretch (polar residues) spans 1658 to 1676 (PIAQPASSFQVETASQGHS). The segment covering 1677-1694 (ISHHKSTPISSSRRKSRK) has biased composition (basic residues).

The protein belongs to the 5'-3' exonuclease family. In terms of assembly, found in a mRNP complex with UPF1, UPF2, UPF3B and XRN1. Associates with alpha and beta tubulins. Interacts with DIS3L2. Interacts with ZC3HAV1 in an RNA-dependent manner. Interacts with ZFP36L1. Interacts with TRIM71 (via NHL repeats) in an RNA-dependent manner. Interacts with YTHDC2 (via ANK repeats). Interacts with DHX34; the interaction is RNA-independent. In terms of tissue distribution, expressed in heart, brain, pancreas, spleen, testis, osteogenic sarcoma (OGS) biopsy and primary cell lines.

It is found in the cytoplasm. Major 5'-3' exoribonuclease involved in mRNA decay. Required for the 5'-3'-processing of the G4 tetraplex-containing DNA and RNA substrates. The kinetic of hydrolysis is faster for G4 RNA tetraplex than for G4 DNA tetraplex and monomeric RNA tetraplex. Binds to RNA and DNA. Plays a role in replication-dependent histone mRNA degradation. May act as a tumor suppressor protein in osteogenic sarcoma (OGS). This chain is 5'-3' exoribonuclease 1, found in Homo sapiens (Human).